The following is a 61-amino-acid chain: Large ribosomal subunit protein uL30 (61 aa).

Belongs to the universal ribosomal protein uL30 family. Part of the 50S ribosomal subunit.

This is Large ribosomal subunit protein uL30 from Thermobifida fusca (strain YX).